Reading from the N-terminus, the 343-residue chain is Ribosome production factor 1 (343 aa).

Composition is skewed to basic and acidic residues over residues 1–10 (MAEKKGPEAK) and 82–91 (EREALGDKAP). 2 disordered regions span residues 1–51 (MAEK…LSEI) and 77–97 (KKRKKEREALGDKAPPKPVPK). The 184-residue stretch at 136 to 319 (PKILITTSDR…LRSLQKGTFD (184 aa)) folds into the Brix domain. The segment at 297–314 (VGIQELGPRFTLKLRSLQ) is RNA-binding.

The protein localises to the nucleus. The protein resides in the nucleolus. May be required for ribosome biogenesis. In Xenopus laevis (African clawed frog), this protein is Ribosome production factor 1 (rpf1).